The sequence spans 158 residues: MAARSVSGITRRVFMWTVSGTPRREFWSRFRKEKEPVVVETVEEKKEPILACPPLRSRAYTPPEDLQSRLESYVKEFFGSSLPSNWQDISLEDSRLKFNLLAHLADDLGHVVPNSRLHQMCRVRDVLDFYNVPIQDRSKFDELNASNLPPNLKITWSY.

This sequence belongs to the mitochondrion-specific ribosomal protein mL50 family. In terms of assembly, component of the mitochondrial ribosome large subunit (39S) which comprises a 16S rRNA and about 50 distinct proteins.

It localises to the mitochondrion. The polypeptide is Large ribosomal subunit protein mL50 (MRPL50) (Pongo abelii (Sumatran orangutan)).